The primary structure comprises 446 residues: Na(+)-translocating NADH-quinone reductase subunit A (446 aa).

This sequence belongs to the NqrA family. In terms of assembly, composed of six subunits; NqrA, NqrB, NqrC, NqrD, NqrE and NqrF.

The catalysed reaction is a ubiquinone + n Na(+)(in) + NADH + H(+) = a ubiquinol + n Na(+)(out) + NAD(+). Its function is as follows. NQR complex catalyzes the reduction of ubiquinone-1 to ubiquinol by two successive reactions, coupled with the transport of Na(+) ions from the cytoplasm to the periplasm. NqrA to NqrE are probably involved in the second step, the conversion of ubisemiquinone to ubiquinol. The polypeptide is Na(+)-translocating NADH-quinone reductase subunit A (Vibrio cholerae serotype O1 (strain ATCC 39541 / Classical Ogawa 395 / O395)).